The primary structure comprises 168 residues: Endoribonuclease YbeY (168 aa).

Positions 127, 131, and 137 each coordinate Zn(2+).

Belongs to the endoribonuclease YbeY family. The cofactor is Zn(2+).

The protein resides in the cytoplasm. In terms of biological role, single strand-specific metallo-endoribonuclease involved in late-stage 70S ribosome quality control and in maturation of the 3' terminus of the 16S rRNA. This chain is Endoribonuclease YbeY, found in Chromobacterium violaceum (strain ATCC 12472 / DSM 30191 / JCM 1249 / CCUG 213 / NBRC 12614 / NCIMB 9131 / NCTC 9757 / MK).